The following is a 200-amino-acid chain: Inner membrane-spanning protein YciB (200 aa).

The next 6 helical transmembrane spans lie at 1 to 21 (MPPL…FFAN), 37 to 57 (IGAP…IALA), 66 to 86 (LPIM…LTLW), 103 to 123 (LFGG…GYVF), 136 to 156 (KLTL…EIVW), and 167 to 187 (FKVW…MPLI).

This sequence belongs to the YciB family.

It localises to the cell inner membrane. Plays a role in cell envelope biogenesis, maintenance of cell envelope integrity and membrane homeostasis. The polypeptide is Inner membrane-spanning protein YciB (Brucella suis biovar 1 (strain 1330)).